Reading from the N-terminus, the 181-residue chain is Large ribosomal subunit protein uL5 (181 aa).

The protein belongs to the universal ribosomal protein uL5 family. Part of the 50S ribosomal subunit; part of the 5S rRNA/L5/L18/L25 subcomplex. Contacts the 5S rRNA and the P site tRNA. Forms a bridge to the 30S subunit in the 70S ribosome.

Its function is as follows. This is one of the proteins that bind and probably mediate the attachment of the 5S RNA into the large ribosomal subunit, where it forms part of the central protuberance. In the 70S ribosome it contacts protein S13 of the 30S subunit (bridge B1b), connecting the 2 subunits; this bridge is implicated in subunit movement. Contacts the P site tRNA; the 5S rRNA and some of its associated proteins might help stabilize positioning of ribosome-bound tRNAs. This is Large ribosomal subunit protein uL5 from Helicobacter pylori (strain Shi470).